Consider the following 301-residue polypeptide: Mating type protein mtA-1 (301 aa).

The alpha box DNA-binding region spans 49 to 104; that stretch reads APKKKVNGFMGFRSYYSSLFSQFPQKARSPFMTILWQHDPFHNEWDFMCSVYSSIR.

It belongs to the MATALPHA1 family.

It localises to the nucleus. Mating type proteins are sequence specific DNA-binding proteins that act as master switches in fungal differentiation by controlling gene expression in a cell type-specific fashion. Transcriptional activator that induces the transcription of alpha-specific genes. The protein is Mating type protein mtA-1 (MTA1) of Sordaria fimicola.